Here is a 143-residue protein sequence, read N- to C-terminus: Transmembrane protein 207 (143 aa).

The first 29 residues, 1–29 (MSTSSPFRVASKIVTAGCLCLPLFQRVLS), serve as a signal peptide directing secretion. A helical transmembrane segment spans residues 52–72 (IWFFLLIFLVVLLCGVVLFCL).

As to quaternary structure, interacts with WWOX.

The protein localises to the membrane. This is Transmembrane protein 207 from Mus musculus (Mouse).